Consider the following 475-residue polypeptide: 1,3-beta-glucanosyltransferase gel2 (475 aa).

Residues 1–21 form the signal peptide; it reads MLPTYVRLFTAVCALATTASA. Cysteine 69 and cysteine 98 form a disulfide bridge. Tyrosine 87, asparagine 159, glutamate 160, and aspartate 201 together coordinate (1,3-beta-D-glucosyl)n. The active-site Proton donor is glutamate 160. Disulfide bonds link cysteine 215–cysteine 350 and cysteine 234–cysteine 265. N-linked (GlcNAc...) asparagine glycosylation is present at asparagine 236. Residue glutamate 262 is the Nucleophile of the active site. Tyrosine 294 contributes to the (1,3-beta-D-glucosyl)n binding site. N-linked (GlcNAc...) asparagine glycosylation is found at asparagine 311, asparagine 339, and asparagine 357. Residues 420–451 are disordered; it reads GESNTPGAHSSGSTSGSSSSGGSSSSSSDKES. The segment covering 429–446 has biased composition (low complexity); sequence SSGSTSGSSSSGGSSSSS. Residue serine 451 is the site of GPI-like-anchor amidated serine attachment. Positions 452–475 are cleaved as a propeptide — removed in mature form; the sequence is AAGTISVPFVGLLSAASFMAFFML.

The protein belongs to the glycosyl hydrolase 72 family. Post-translationally, the GPI-like anchor contains a phosphoceramide lipid group.

It is found in the cell membrane. Its function is as follows. Splits internally a 1,3-beta-glucan molecule and transfers the newly generated reducing end (the donor) to the non-reducing end of another 1,3-beta-glucan molecule (the acceptor) forming a 1,3-beta linkage, resulting in the elongation of 1,3-beta-glucan chains in the cell wall. Involved in cell wall morphogenesis. This is 1,3-beta-glucanosyltransferase gel2 (gel2) from Aspergillus fumigatus (strain CBS 144.89 / FGSC A1163 / CEA10) (Neosartorya fumigata).